A 108-amino-acid chain; its full sequence is DIQMTQTTSSLSASLGDRVTISCRASQDISNYLNWYQQKPDGTVKLLIYYTSRLHSGVPSRFSGSGSGTDYSLTISNLEQEDIATYFCQQGNMLPRTFGGGTKLEIKR.

Residues D1–C23 form a framework-1 region. C23 and C88 are disulfide-bonded. The tract at residues R24–N34 is complementarity-determining-1. A framework-2 region spans residues W35–Y49. The tract at residues Y50 to S56 is complementarity-determining-2. A framework-3 region spans residues G57–C88. Residues Q89–T97 are complementarity-determining-3. A framework-4 region spans residues F98–R108.

In Mus musculus (Mouse), this protein is Ig kappa chain V-V region HP 93G7.